The following is a 382-amino-acid chain: Carbamoyl phosphate synthase small chain (382 aa).

The CPSase stretch occupies residues 1-189 (MIKSALLVLE…GLPEAKKEDE (189 aa)). 3 residues coordinate L-glutamine: Ser47, Gly241, and Gly243. The 188-residue stretch at 193–380 (HVVAYDFGAK…IELIEQYRKT (188 aa)) folds into the Glutamine amidotransferase type-1 domain. Residue Cys269 is the Nucleophile of the active site. Leu270, Gln273, Asn311, Gly313, and Phe314 together coordinate L-glutamine. Active-site residues include His353 and Glu355.

The protein belongs to the CarA family. In terms of assembly, composed of two chains; the small (or glutamine) chain promotes the hydrolysis of glutamine to ammonia, which is used by the large (or ammonia) chain to synthesize carbamoyl phosphate. Tetramer of heterodimers (alpha,beta)4.

It catalyses the reaction hydrogencarbonate + L-glutamine + 2 ATP + H2O = carbamoyl phosphate + L-glutamate + 2 ADP + phosphate + 2 H(+). The catalysed reaction is L-glutamine + H2O = L-glutamate + NH4(+). It functions in the pathway amino-acid biosynthesis; L-arginine biosynthesis; carbamoyl phosphate from bicarbonate: step 1/1. Its pathway is pyrimidine metabolism; UMP biosynthesis via de novo pathway; (S)-dihydroorotate from bicarbonate: step 1/3. Its function is as follows. Small subunit of the glutamine-dependent carbamoyl phosphate synthetase (CPSase). CPSase catalyzes the formation of carbamoyl phosphate from the ammonia moiety of glutamine, carbonate, and phosphate donated by ATP, constituting the first step of 2 biosynthetic pathways, one leading to arginine and/or urea and the other to pyrimidine nucleotides. The small subunit (glutamine amidotransferase) binds and cleaves glutamine to supply the large subunit with the substrate ammonia. The chain is Carbamoyl phosphate synthase small chain from Escherichia coli O157:H7.